A 419-amino-acid polypeptide reads, in one-letter code: GTPase Obg (419 aa).

An Obg domain is found at serine 2–leucine 159. Positions alanine 160–lysine 325 constitute an OBG-type G domain. Residues glycine 166 to serine 173, phenylalanine 191 to serine 195, aspartate 212 to glycine 215, asparagine 279 to aspartate 282, and serine 306 to leucine 308 contribute to the GTP site. Mg(2+) is bound by residues serine 173 and threonine 193. Positions leucine 341–glutamate 419 constitute an OCT domain.

The protein belongs to the TRAFAC class OBG-HflX-like GTPase superfamily. OBG GTPase family. As to quaternary structure, monomer. Mg(2+) is required as a cofactor.

The protein localises to the cytoplasm. Its function is as follows. An essential GTPase which binds GTP, GDP and possibly (p)ppGpp with moderate affinity, with high nucleotide exchange rates and a fairly low GTP hydrolysis rate. Plays a role in control of the cell cycle, stress response, ribosome biogenesis and in those bacteria that undergo differentiation, in morphogenesis control. This chain is GTPase Obg, found in Acholeplasma laidlawii (strain PG-8A).